Consider the following 212-residue polypeptide: Uracil phosphoribosyltransferase (212 aa).

5-phospho-alpha-D-ribose 1-diphosphate-binding positions include R78, R103, and 130–138 (DPMLATGSS). Uracil-binding positions include I193 and 198–200 (GDA). D199 is a 5-phospho-alpha-D-ribose 1-diphosphate binding site.

Belongs to the UPRTase family. Requires Mg(2+) as cofactor.

The catalysed reaction is UMP + diphosphate = 5-phospho-alpha-D-ribose 1-diphosphate + uracil. The protein operates within pyrimidine metabolism; UMP biosynthesis via salvage pathway; UMP from uracil: step 1/1. With respect to regulation, allosterically activated by GTP. In terms of biological role, catalyzes the conversion of uracil and 5-phospho-alpha-D-ribose 1-diphosphate (PRPP) to UMP and diphosphate. This chain is Uracil phosphoribosyltransferase, found in Pseudomonas fluorescens (strain SBW25).